The chain runs to 424 residues: Protein shisa-9 (424 aa).

An N-terminal signal peptide occupies residues 1-23 (MRRVLRLLLGCFLTELCARVCRA). Residues 24 to 149 (QERAGHGQLA…DPLHDPTKDK (126 aa)) are Extracellular-facing. Asn-45, Asn-89, and Asn-116 each carry an N-linked (GlcNAc...) asparagine glycan. Residues 150–170 (TNLIVYIICGVVAVMVLVGIF) traverse the membrane as a helical segment. At 171 to 424 (TKLGLEKAHR…ITNSKTEVTV (254 aa)) the chain is on the cytoplasmic side. Positions 333-424 (PRAFSPEHGP…ITNSKTEVTV (92 aa)) are disordered. A compositionally biased stretch (polar residues) spans 414–424 (FITNSKTEVTV).

It belongs to the shisa family. SHISA9 subfamily. Component of some AMPA receptors (ionotropic glutamate receptors) complex, at least composed of some AMPA receptor (GRIA1, GRIA2 and/or GRIA3), CACNG2 and SHISA9, as well as low level of DLG4.

The protein resides in the cell projection. It is found in the dendritic spine membrane. The protein localises to the synapse. In terms of biological role, regulator of short-term neuronal synaptic plasticity in the dentate gyrus. Associates with AMPA receptors (ionotropic glutamate receptors) in synaptic spines and promotes AMPA receptor desensitization at excitatory synapses. In Homo sapiens (Human), this protein is Protein shisa-9 (SHISA9).